The primary structure comprises 1370 residues: Major capsid protein (1370 aa).

This sequence belongs to the herpesviridae major capsid protein family. Homomultimer. Makes the hexons and eleven out of twelve pentons. Interacts with triplex proteins 1/TRX1 and 2/TRX2; adjacent capsomers are linked together in groups of three by triplexes, heterotrimeric complexes composed of one molecule of TRX1 and two molecules of TRX2. Interacts with scaffold protein; this interaction allows efficient MCP transport to the host nucleus. Interacts with capsid vertex component 2/CVC2. Interacts with the small capsomere-interacting protein/SCP.

Its subcellular location is the virion. The protein localises to the host nucleus. Functionally, self-assembles to form an icosahedral capsid with a T=16 symmetry, about 200 nm in diameter, and consisting of 150 hexons and 12 pentons (total of 162 capsomers). Hexons form the edges and faces of the capsid and are each composed of six MCP molecules. In contrast, one penton is found at each of the 12 vertices. Eleven of the pentons are MCP pentamers, while the last vertex is occupied by the portal complex. The capsid is surrounded by a layer of proteinaceous material designated the tegument which, in turn, is enclosed in an envelope of host cell-derived lipids containing virus-encoded glycoproteins. The protein is Major capsid protein of Human cytomegalovirus (strain AD169) (HHV-5).